Reading from the N-terminus, the 197-residue chain is Phospholipid hydroperoxide glutathione peroxidase (197 aa).

Residue Ser40 is modified to Phosphoserine. Residue Sec73 is part of the active site. Sec73 is a non-standard amino acid (selenocysteine).

This sequence belongs to the glutathione peroxidase family. In terms of assembly, monomer. Has a tendency to form higher mass oligomers. Interacts with FUNDC1; this interaction promotes GPX4 recruitment into mitochondria through TOM/TIM complex where it is degraded by mitophagy.

It is found in the mitochondrion. It localises to the cytoplasm. The enzyme catalyses a hydroperoxy polyunsaturated fatty acid + 2 glutathione = a hydroxy polyunsaturated fatty acid + glutathione disulfide + H2O. It catalyses the reaction 2 glutathione + H2O2 = glutathione disulfide + 2 H2O. It carries out the reaction tert-butyl hydroperoxide + 2 glutathione = tert-butanol + glutathione disulfide + H2O. The catalysed reaction is cumene hydroperoxide + 2 glutathione = 2-phenylpropan-2-ol + glutathione disulfide + H2O. The enzyme catalyses (9S)-hydroperoxy-(10E,12Z)-octadecadienoate + 2 glutathione = (9S)-hydroxy-(10E,12Z)-octadecadienoate + glutathione disulfide + H2O. It catalyses the reaction (13S)-hydroperoxy-(9Z,11E)-octadecadienoate + 2 glutathione = (13S)-hydroxy-(9Z,11E)-octadecadienoate + glutathione disulfide + H2O. It carries out the reaction (5S)-hydroperoxy-(6E,8Z,11Z,14Z)-eicosatetraenoate + 2 glutathione = (5S)-hydroxy-(6E,8Z,11Z,14Z)-eicosatetraenoate + glutathione disulfide + H2O. The catalysed reaction is (12R)-hydroperoxy-(5Z,8Z,10E,14Z)-eicosatetraenoate + 2 glutathione = (12R)-hydroxy-(5Z,8Z,10E,14Z)-eicosatetraenoate + glutathione disulfide + H2O. The enzyme catalyses (12S)-hydroperoxy-(5Z,8Z,10E,14Z)-eicosatetraenoate + 2 glutathione = (12S)-hydroxy-(5Z,8Z,10E,14Z)-eicosatetraenoate + glutathione disulfide + H2O. It catalyses the reaction (15S)-hydroperoxy-(5Z,8Z,11Z,13E)-eicosatetraenoate + 2 glutathione = (15S)-hydroxy-(5Z,8Z,11Z,13E)-eicosatetraenoate + glutathione disulfide + H2O. It carries out the reaction (5S)-hydroperoxy-(6E,8Z,11Z,14Z,17Z)-eicosapentaenoate + 2 glutathione = (5S)-hydroxy-(6E,8Z,11Z,14Z,17Z)-eicosapentaenoate + glutathione disulfide + H2O. The catalysed reaction is (12S)-hydroperoxy-(5Z,8Z,10E,14Z,17Z)-eicosapentaenoate + 2 glutathione = (12S)-hydroxy-(5Z,8Z,10E,14Z,17Z)-eicosapentaenoate + glutathione disulfide + H2O. The enzyme catalyses (15S)-hydroperoxy-(5Z,8Z,11Z,13E,17Z)-eicosapentaenoate + 2 glutathione = (15S)-hydroxy-(5Z,8Z,11Z,13E,17Z)-eicosapentaenoate + glutathione disulfide + H2O. It catalyses the reaction (15S)-hydroperoxy-(11Z,13E)-eicosadienoate + 2 glutathione = (15S)-hydroxy-(11Z,13E)-eicosadienoate + glutathione disulfide + H2O. It carries out the reaction (17S)-hydroperoxy-(4Z,7Z,10Z,13Z,15E,19Z)-docosahexaenoate + 2 glutathione = (17S)-hydroxy-(4Z,7Z,10Z,13Z,15E,19Z)-docosahexaenoate + glutathione disulfide + H2O. The catalysed reaction is a hydroperoxy-1,2-diacyl-glycero-3-phosphocholine + 2 glutathione = a hydroxy-1,2-diacyl-glycero-3-phosphocholine + glutathione disulfide + H2O. Functionally, essential antioxidant peroxidase that directly reduces phospholipid hydroperoxide even if they are incorporated in membranes and lipoproteins. Can also reduce fatty acid hydroperoxide, cholesterol hydroperoxide and thymine hydroperoxide. Plays a key role in protecting cells from oxidative damage by preventing membrane lipid peroxidation. Required to prevent cells from ferroptosis, a non-apoptotic cell death resulting from an iron-dependent accumulation of lipid reactive oxygen species. The presence of selenocysteine (Sec) versus Cys at the active site is essential for life: it provides resistance to overoxidation and prevents cells against ferroptosis. The presence of Sec at the active site is also essential for the survival of a specific type of parvalbumin-positive interneurons, thereby preventing against fatal epileptic seizures. May be required to protect cells from the toxicity of ingested lipid hydroperoxides. Required for normal sperm development and male fertility. Essential for maturation and survival of photoreceptor cells. Plays a role in a primary T-cell response to viral and parasitic infection by protecting T-cells from ferroptosis and by supporting T-cell expansion. Plays a role of glutathione peroxidase in platelets in the arachidonic acid metabolism. Reduces hydroperoxy ester lipids formed by a 15-lipoxygenase that may play a role as down-regulator of the cellular 15-lipoxygenase pathway. Can also reduce small soluble hydroperoxides such as H2O2, cumene hydroperoxide and tert-butyl hydroperoxide. In Bos taurus (Bovine), this protein is Phospholipid hydroperoxide glutathione peroxidase.